We begin with the raw amino-acid sequence, 230 residues long: 6-carboxyhexanoate--CoA ligase (230 aa).

This sequence belongs to the BioW family. In terms of assembly, homodimer. It depends on Mg(2+) as a cofactor.

It carries out the reaction heptanedioate + ATP + CoA = 6-carboxyhexanoyl-CoA + AMP + diphosphate. It participates in metabolic intermediate metabolism; pimeloyl-CoA biosynthesis; pimeloyl-CoA from pimelate: step 1/1. Catalyzes the transformation of pimelate into pimeloyl-CoA with concomitant hydrolysis of ATP to AMP. This Staphylococcus aureus (strain MSSA476) protein is 6-carboxyhexanoate--CoA ligase.